The primary structure comprises 37 residues: Large ribosomal subunit protein bL36A (37 aa).

It belongs to the bacterial ribosomal protein bL36 family.

The polypeptide is Large ribosomal subunit protein bL36A (Kocuria rhizophila (strain ATCC 9341 / DSM 348 / NBRC 103217 / DC2201)).